The primary structure comprises 288 residues: Polyamine aminopropyltransferase (288 aa).

The 230-residue stretch at 9-238 (ETLHDQFGQY…GIMTFAWATD (230 aa)) folds into the PABS domain. Glutamine 33 is a binding site for S-methyl-5'-thioadenosine. Histidine 64 and aspartate 88 together coordinate spermidine. S-methyl-5'-thioadenosine-binding positions include glutamate 108 and 140 to 141 (DG). The active-site Proton acceptor is the aspartate 158. Position 158–161 (158–161 (DCTD)) interacts with spermidine. An S-methyl-5'-thioadenosine-binding site is contributed by proline 165.

Belongs to the spermidine/spermine synthase family. Homodimer or homotetramer.

Its subcellular location is the cytoplasm. The catalysed reaction is S-adenosyl 3-(methylsulfanyl)propylamine + putrescine = S-methyl-5'-thioadenosine + spermidine + H(+). It participates in amine and polyamine biosynthesis; spermidine biosynthesis; spermidine from putrescine: step 1/1. Catalyzes the irreversible transfer of a propylamine group from the amino donor S-adenosylmethioninamine (decarboxy-AdoMet) to putrescine (1,4-diaminobutane) to yield spermidine. In Escherichia fergusonii (strain ATCC 35469 / DSM 13698 / CCUG 18766 / IAM 14443 / JCM 21226 / LMG 7866 / NBRC 102419 / NCTC 12128 / CDC 0568-73), this protein is Polyamine aminopropyltransferase.